We begin with the raw amino-acid sequence, 693 residues long: Polyribonucleotide nucleotidyltransferase (693 aa).

Mg(2+) is bound by residues Asp486 and Asp492. Residues Pro553–Ile612 enclose the KH domain. Residues Gly622 to Lys690 enclose the S1 motif domain.

This sequence belongs to the polyribonucleotide nucleotidyltransferase family. Component of the RNA degradosome, which is a multiprotein complex involved in RNA processing and mRNA degradation. Requires Mg(2+) as cofactor.

It localises to the cytoplasm. It catalyses the reaction RNA(n+1) + phosphate = RNA(n) + a ribonucleoside 5'-diphosphate. In terms of biological role, involved in mRNA degradation. Catalyzes the phosphorolysis of single-stranded polyribonucleotides processively in the 3'- to 5'-direction. This chain is Polyribonucleotide nucleotidyltransferase, found in Thioalkalivibrio sulfidiphilus (strain HL-EbGR7).